A 466-amino-acid chain; its full sequence is Phosphomethylpyrimidine synthase (466 aa).

Residues Asn80, Met109, Tyr139, His175, 195-197 (SRG), 236-239 (DSLR), and Glu275 each bind substrate. His279 serves as a coordination point for Zn(2+). Tyr302 contributes to the substrate binding site. His343 provides a ligand contact to Zn(2+). [4Fe-4S] cluster-binding residues include Cys423, Cys426, and Cys431.

This sequence belongs to the ThiC family. The cofactor is [4Fe-4S] cluster.

It carries out the reaction 5-amino-1-(5-phospho-beta-D-ribosyl)imidazole + S-adenosyl-L-methionine = 4-amino-2-methyl-5-(phosphooxymethyl)pyrimidine + CO + 5'-deoxyadenosine + formate + L-methionine + 3 H(+). It participates in cofactor biosynthesis; thiamine diphosphate biosynthesis. Catalyzes the synthesis of the hydroxymethylpyrimidine phosphate (HMP-P) moiety of thiamine from aminoimidazole ribotide (AIR) in a radical S-adenosyl-L-methionine (SAM)-dependent reaction. This Synechococcus sp. (strain RCC307) protein is Phosphomethylpyrimidine synthase.